The sequence spans 316 residues: Peroxisomal targeting signal 2 receptor (316 aa).

6 WD repeats span residues 56–96, 102–142, 145–185, 188–228, 232–272, and 277–316; these read DTRD…GGRP, EHTK…SLKT, EHRY…SLNT, AHDH…RPTT, GHTY…DPII, and HHTEFVVGLDWNMFIDGQMASCSWDEQVCVWNLGRPGQFR.

Belongs to the WD repeat peroxin-7 family. Interacts with PEX5; interaction only takes place when PEX7 is associated with cargo proteins.

Its subcellular location is the cytoplasm. The protein localises to the cytosol. It is found in the peroxisome matrix. Receptor required for the peroxisomal import of proteins containing a C-terminal PTS2-type peroxisomal targeting signal. Specifically binds to cargo proteins containing a PTS2 peroxisomal targeting signal in the cytosol. Cargo protein-binding triggers interaction with PEX5 and formation of a ternary complex composed of PEX5 and PEX7 along with PTS2-containing cargo proteins, which is tranlocated into peroxisomes by passing through the PEX13-PEX14 docking complex. The sequence is that of Peroxisomal targeting signal 2 receptor (pex7) from Dictyostelium discoideum (Social amoeba).